The following is a 109-amino-acid chain: uncharacterized protein (109 aa).

Residues aspartate 63 to cysteine 109 are disordered. 2 stretches are compositionally biased toward basic and acidic residues: residues glutamate 73–glutamine 87 and glycine 94–cysteine 109.

This is an uncharacterized protein from Caenorhabditis elegans.